A 332-amino-acid chain; its full sequence is T-cell surface glycoprotein CD1c2 (332 aa).

The first 17 residues, 1–17 (MLFLQFLFVDVVLGGSI), serve as a signal peptide directing secretion. Residues 18-300 (TENVVQENIS…IILYWGHGLS (283 aa)) lie on the Extracellular side of the membrane. N-linked (GlcNAc...) asparagine glycosylation is found at Asn25, Asn38, and Asn75. Cystine bridges form between Cys120–Cys184 and Cys224–Cys279. Residues 205–292 (PEVWLSSSPN…HSSLRDQDII (88 aa)) form the Ig-like domain. The chain crosses the membrane as a helical span at residues 301–321 (VILIALAVIVPLVLLIVLVLL). At 322-332 (CKKRCTYQGIP) the chain is on the cytoplasmic side.

In terms of assembly, heterodimer with B2M (beta-2-microglobulin).

Its subcellular location is the cell membrane. It is found in the endosome membrane. Antigen-presenting protein that binds self and non-self lipid and glycolipid antigens and presents them to T-cell receptors on natural killer T-cells. The polypeptide is T-cell surface glycoprotein CD1c2 (CD1C2) (Cavia porcellus (Guinea pig)).